A 540-amino-acid polypeptide reads, in one-letter code: CUB domain-containing protein 2 (540 aa).

The N-terminal stretch at 1–22 (MLAEWGACLLLAVALLGPGLQA) is a signal peptide. At 23–516 (QAMEGVKCGG…VSMVAQDTSD (494 aa)) the chain is on the extracellular side. Intrachain disulfides connect Cys30/Cys56, Cys83/Cys106, Cys145/Cys171, Cys198/Cys218, Cys257/Cys283, and Cys314/Cys336. CUB domains lie at 30 to 143 (CGGV…YQKD), 145 to 255 (CGGV…YFSG), and 257 to 373 (CQEV…YIGV). Asn40 carries an N-linked (GlcNAc...) asparagine glycan. A glycan (N-linked (GlcNAc...) asparagine) is linked at Asn267. N-linked (GlcNAc...) asparagine glycosylation is found at Asn377, Asn435, and Asn436. The helical transmembrane segment at 517–537 (IVFLGLCILAGILMVIAIVVL) threads the bilayer. At 538-540 (MLL) the chain is on the cytoplasmic side.

It is found in the membrane. The sequence is that of CUB domain-containing protein 2 (CDCP2) from Homo sapiens (Human).